A 311-amino-acid polypeptide reads, in one-letter code: tRNA-cytidine(32) 2-sulfurtransferase (311 aa).

The segment at 18 to 38 (KVGADHGPSEENGSSHPLFDN) is disordered. Positions 77-82 (SGGKDS) match the PP-loop motif motif. [4Fe-4S] cluster is bound by residues C152, C155, and C243.

This sequence belongs to the TtcA family. Homodimer. Mg(2+) is required as a cofactor. The cofactor is [4Fe-4S] cluster.

The protein resides in the cytoplasm. It carries out the reaction cytidine(32) in tRNA + S-sulfanyl-L-cysteinyl-[cysteine desulfurase] + AH2 + ATP = 2-thiocytidine(32) in tRNA + L-cysteinyl-[cysteine desulfurase] + A + AMP + diphosphate + H(+). The protein operates within tRNA modification. Catalyzes the ATP-dependent 2-thiolation of cytidine in position 32 of tRNA, to form 2-thiocytidine (s(2)C32). The sulfur atoms are provided by the cysteine/cysteine desulfurase (IscS) system. This Agrobacterium fabrum (strain C58 / ATCC 33970) (Agrobacterium tumefaciens (strain C58)) protein is tRNA-cytidine(32) 2-sulfurtransferase.